A 101-amino-acid chain; its full sequence is Large ribosomal subunit protein uL23 (101 aa).

This sequence belongs to the universal ribosomal protein uL23 family. Part of the 50S ribosomal subunit. Contacts protein L29, and trigger factor when it is bound to the ribosome.

In terms of biological role, one of the early assembly proteins it binds 23S rRNA. One of the proteins that surrounds the polypeptide exit tunnel on the outside of the ribosome. Forms the main docking site for trigger factor binding to the ribosome. In Mannheimia succiniciproducens (strain KCTC 0769BP / MBEL55E), this protein is Large ribosomal subunit protein uL23.